The chain runs to 189 residues: Ribosome-recycling factor (189 aa).

It belongs to the RRF family.

The protein resides in the cytoplasm. Functionally, responsible for the release of ribosomes from messenger RNA at the termination of protein biosynthesis. May increase the efficiency of translation by recycling ribosomes from one round of translation to another. This is Ribosome-recycling factor from Salinibacter ruber (strain DSM 13855 / M31).